The primary structure comprises 406 residues: Imidazolonepropionase (406 aa).

Fe(3+)-binding residues include H72 and H74. Positions 72 and 74 each coordinate Zn(2+). Positions 81, 144, and 177 each coordinate 4-imidazolone-5-propanoate. Residue Y144 participates in N-formimidoyl-L-glutamate binding. H242 is a binding site for Fe(3+). H242 contacts Zn(2+). 4-imidazolone-5-propanoate is bound at residue Q245. D317 is a Fe(3+) binding site. D317 is a binding site for Zn(2+). The N-formimidoyl-L-glutamate site is built by N319 and G321. 4-imidazolone-5-propanoate is bound at residue T322.

The protein belongs to the metallo-dependent hydrolases superfamily. HutI family. Zn(2+) is required as a cofactor. Requires Fe(3+) as cofactor.

It is found in the cytoplasm. The catalysed reaction is 4-imidazolone-5-propanoate + H2O = N-formimidoyl-L-glutamate. Its pathway is amino-acid degradation; L-histidine degradation into L-glutamate; N-formimidoyl-L-glutamate from L-histidine: step 3/3. In terms of biological role, catalyzes the hydrolytic cleavage of the carbon-nitrogen bond in imidazolone-5-propanoate to yield N-formimidoyl-L-glutamate. It is the third step in the universal histidine degradation pathway. This Yersinia enterocolitica serotype O:8 / biotype 1B (strain NCTC 13174 / 8081) protein is Imidazolonepropionase.